The following is a 234-amino-acid chain: (5-formylfuran-3-yl)methyl phosphate synthase (234 aa).

Lys-27 acts as the Schiff-base intermediate with substrate in catalysis. Residue Lys-85 is the Proton acceptor of the active site.

It belongs to the MfnB family.

The enzyme catalyses 2 D-glyceraldehyde 3-phosphate = 4-(hydroxymethyl)-2-furancarboxaldehyde phosphate + phosphate + 2 H2O. It functions in the pathway cofactor biosynthesis; methanofuran biosynthesis. Catalyzes the formation of 4-(hydroxymethyl)-2-furancarboxaldehyde phosphate (4-HFC-P) from two molecules of glyceraldehyde-3-P (GA-3-P). The chain is (5-formylfuran-3-yl)methyl phosphate synthase from Methanosarcina barkeri (strain Fusaro / DSM 804).